Reading from the N-terminus, the 122-residue chain is Large ribosomal subunit protein uL14 (122 aa).

It belongs to the universal ribosomal protein uL14 family. As to quaternary structure, part of the 50S ribosomal subunit. Forms a cluster with proteins L3 and L19. In the 70S ribosome, L14 and L19 interact and together make contacts with the 16S rRNA in bridges B5 and B8.

Functionally, binds to 23S rRNA. Forms part of two intersubunit bridges in the 70S ribosome. This is Large ribosomal subunit protein uL14 from Francisella tularensis subsp. holarctica (strain LVS).